We begin with the raw amino-acid sequence, 154 residues long: 6,7-dimethyl-8-ribityllumazine synthase (154 aa).

5-amino-6-(D-ribitylamino)uracil is bound by residues phenylalanine 26, 60 to 62, and 84 to 86; these read ALE and CII. 89 to 90 provides a ligand contact to (2S)-2-hydroxy-3-oxobutyl phosphate; the sequence is QT. Catalysis depends on histidine 92, which acts as the Proton donor. Asparagine 117 contributes to the 5-amino-6-(D-ribitylamino)uracil binding site. Residue arginine 131 participates in (2S)-2-hydroxy-3-oxobutyl phosphate binding.

The protein belongs to the DMRL synthase family.

The catalysed reaction is (2S)-2-hydroxy-3-oxobutyl phosphate + 5-amino-6-(D-ribitylamino)uracil = 6,7-dimethyl-8-(1-D-ribityl)lumazine + phosphate + 2 H2O + H(+). The protein operates within cofactor biosynthesis; riboflavin biosynthesis; riboflavin from 2-hydroxy-3-oxobutyl phosphate and 5-amino-6-(D-ribitylamino)uracil: step 1/2. Its function is as follows. Catalyzes the formation of 6,7-dimethyl-8-ribityllumazine by condensation of 5-amino-6-(D-ribitylamino)uracil with 3,4-dihydroxy-2-butanone 4-phosphate. This is the penultimate step in the biosynthesis of riboflavin. This Verminephrobacter eiseniae (strain EF01-2) protein is 6,7-dimethyl-8-ribityllumazine synthase.